The sequence spans 1669 residues: MTAKPPPPIPPTLGGDDSGTHGPKLAPEIPRINSELAAQAALRGQQLLRKQGSQEQHATNTLPAHKTGAPPPLPPTQSRPVPAIPARGASDRAAPPEIPPKRHSLKSMPDGQPMMVPGLPPTMRQPPPLPRKPASTQSSAQNSAQSSPLAGMKFKDKPPPPPEKHSTLSAEGMAARRCSNPFEMPPPPPPLVLQSAVAALSEQSSKNGLNPVPSPAPTRASEAKKINQRSIASPTEEFGSEDALRGIESGLRNMERAMQEQMNLRNMEAAVQNNFDLSFKASLAAGARHLGGGSVNLRTANYERNLSLDEGRAGDSRQSLEELKQLRAQAQQQSLLNNSSSSSSNSQVEQSMRSTIEHHMRSLDRNLPLELQYSRHRFQNNLNAVAAAGGGGGNSSTGNAVANSGTSGSQQPPMPLSSEFREQIRQQLLGNIPPQVVHNMGQSPGSAAAAALLQHQAQSRAAAAAAAAAAAAAAAQVAAGSGALSREELRMRRRSSHDETQLTQNSSGGIQVTRLREHWDETSQCVLQRAAQLKNMLSDSQRFEAKRLELEKWLARMEQRAERMGTIATTADILEAQQKEQKSFHAELHQNKQHFDIFNELTQKLIAVYPNDDTTRIKKMTEVINQRYANLNSGVINRGKQLHAAVHSLQSFDRAMDQFLAFLSETETLCENAESDIERNPLMFKDLQSEIETHRVVYDRLDGTGRKLLGSLTSQEDAVMLQRRLDEMNQRWNNLKSKSIAIRNRLESNSEHWNALLLSLRELTEWVIRKDTELSTLGLGPVRGDAVSLQKQLDDHKAFRRQLEDKRPIVESNLTSGRQYIANEAAVSDTSDTEANHDSDSRYMSAEEQSRELTRSIRREVGKLSEQWNNLIDRSDNWKHRLDEYMTKMRQFQKILEDLSSRVALAEQTKTSWLPPSSVGEANEQMQQLQRLRDKMTTASALLDDCNEQQSFFTANQVLVPTPCLSKLEDLNTRMKLLQIAMDERQKVLCQAGAQQTHENGDDGRTTSNSGTIGPLPNLGQSVKPPWERATTAANVPYYIDHERETTHWDHPEMIELMKGLADLNEIRFSAYRTAMKLRSVQKRLALDRISMSTACESFDRHGLRAQNDKLIDIPDMTTVLHSLYVTIDKIDLTLMLDLAINWILNVYDSQRTGQIRVLSFKVGLVLLCKGHLEEKYRYLFRLVADTDRRADQRRLGLLLHDCIQVPRQLGEVAAFGGSNIEPSVRSCLEQAGISQEAIDGNQDISIELQHFLGWLQHEPQSLVWLPVLHRLAAAEAAKHQAKCNICKEYPIVGFRYRCLKCFNFDMCQKCFFFGRNAKNHKLTHPMHEYCTTTTSTEDVRDFTRALKNKFKSRKYFKKHPRVGYLPVQSVLEGDALESPAPSPQHTTHQLQNDMHSRLEMYASRLAQVEYGGTGSNSTPDSDDEHQLIAQYCQALPGTSNGSAPKSPVQVMAAMDAEQREELEAIIRDLEEENANLQAEYQQLCSKEQSGMPEDSNGMQHSSSSMTGLSGQGEQGQDMMAEAKLLRQHKGRLEARMQILEDHNRQLEAQLQRLRQLLDEPNGGGSSATSSGLPSAPGSALNSKPNTLQTRSVTASQLNTDSPAKMNQQNGHYEHNSKNSSGLVTVITEQELESINDDLEDSSSSNTTNTTTTTTTTATTEKTCVELQK.

Over residues 1 to 11 (MTAKPPPPIPP) the composition is skewed to pro residues. Disordered regions lie at residues 1–28 (MTAK…LAPE), 43–243 (RGQQ…SEDA), 327–356 (RAQA…RSTI), 389–417 (GGGG…MPLS), and 481–508 (SGAL…NSSG). The segment covering 53–62 (SQEQHATNTL) has biased composition (polar residues). The segment covering 118-131 (GLPPTMRQPPPLPR) has biased composition (pro residues). A compositionally biased stretch (low complexity) spans 132-147 (KPASTQSSAQNSAQSS). A compositionally biased stretch (basic and acidic residues) spans 153 to 166 (KFKDKPPPPPEKHS). Composition is skewed to low complexity over residues 328 to 347 (AQAQ…SNSQ) and 396 to 405 (STGNAVANSG). The segment covering 485-500 (SREELRMRRRSSHDET) has biased composition (basic and acidic residues). Spectrin repeat units lie at residues 541 to 643 (QRFE…KQLH), 650 to 747 (QSFD…NRLE), 754 to 883 (NALL…HRLD), and 890 to 990 (RQFQ…KVLC). The tract at residues 827–851 (VSDTSDTEANHDSDSRYMSAEEQSR) is disordered. Residues 994–1024 (AQQTHENGDDGRTTSNSGTIGPLPNLGQSVK) are disordered. Positions 1021–1054 (QSVKPPWERATTAANVPYYIDHERETTHWDHPEM) constitute a WW domain. The ZZ-type zinc-finger motif lies at 1279–1335 (KHQAKCNICKEYPIVGFRYRCLKCFNFDMCQKCFFFGRNAKNHKLTHPMHEYCTTTT). Positions 1284, 1287, 1299, 1302, 1308, 1311, 1321, and 1325 each coordinate Zn(2+). S1379 bears the Phosphoserine mark. 2 disordered regions span residues 1488–1516 (EQSG…GEQG) and 1559–1669 (DEPN…ELQK). Polar residues-rich tracts occupy residues 1497 to 1509 (NGMQ…MTGL) and 1580 to 1611 (ALNS…QQNG). Acidic residues predominate over residues 1630 to 1641 (QELESINDDLED). A compositionally biased stretch (low complexity) spans 1642–1660 (SSSSNTTNTTTTTTTTATT).

As to quaternary structure, component of the dystrophin associated protein complex (DAPC). Interacts with Dg, via the Dg WW domain binding sites. As to expression, expressed in neuronally derived tissues, mainly the CNS and the brain of stage 16 embryos. Lower level expression is seen in the sensory organs. Expression is absent from the musculature. In larvae, expression is predominant throughout the neuropil and brain and in the eye antennal disks.

It localises to the cell membrane. The protein resides in the sarcolemma. Its subcellular location is the cytoplasm. It is found in the cytoskeleton. Required for the maintenance of appropriate synaptic retrograde communication and the stabilization of muscle cell architecture or physiology. May play a role in anchoring the cytoskeleton to the plasma membrane. The protein is Dystrophin, isoform B (Dys) of Drosophila melanogaster (Fruit fly).